The primary structure comprises 200 residues: MASTENPDPETGKSEPIPASATTPPPSAASFLDCRKIDVIIRVLLFSATLTALIVMVTSDQTEKTQLPGVSSPAPVSAEFNDSPAFIFFVVALVVTSFYALMSTLVSISLLLKPEFTARVSVYLASLDMVMLGILASATGTAGGVAYIALKGNKEVGWNKICNVYDKFCRYIATSLALSLFATLLLLVLSICSALSKRTP.

Positions 1-26 (MASTENPDPETGKSEPIPASATTPPP) are disordered. Topologically, residues 1–36 (MASTENPDPETGKSEPIPASATTPPPSAASFLDCRK) are cytoplasmic. Residues 37–57 (IDVIIRVLLFSATLTALIVMV) traverse the membrane as a helical segment. At 58 to 85 (TSDQTEKTQLPGVSSPAPVSAEFNDSPA) the chain is on the extracellular side. Residues 86–106 (FIFFVVALVVTSFYALMSTLV) traverse the membrane as a helical segment. Topologically, residues 107–129 (SISLLLKPEFTARVSVYLASLDM) are cytoplasmic. The chain crosses the membrane as a helical span at residues 130–150 (VMLGILASATGTAGGVAYIAL). Over 151-171 (KGNKEVGWNKICNVYDKFCRY) the chain is Extracellular. The chain crosses the membrane as a helical span at residues 172 to 192 (IATSLALSLFATLLLLVLSIC). At 193 to 200 (SALSKRTP) the chain is on the cytoplasmic side.

It belongs to the Casparian strip membrane proteins (CASP) family. As to quaternary structure, homodimer and heterodimers.

It is found in the cell membrane. This Arabidopsis lyrata subsp. lyrata (Lyre-leaved rock-cress) protein is CASP-like protein 1D2.